Reading from the N-terminus, the 425-residue chain is Histidine--tRNA ligase (425 aa).

This sequence belongs to the class-II aminoacyl-tRNA synthetase family. Homodimer.

It localises to the cytoplasm. The enzyme catalyses tRNA(His) + L-histidine + ATP = L-histidyl-tRNA(His) + AMP + diphosphate + H(+). The protein is Histidine--tRNA ligase of Shewanella sp. (strain W3-18-1).